Here is a 179-residue protein sequence, read N- to C-terminus: Large ribosomal subunit protein uL6 (179 aa).

This sequence belongs to the universal ribosomal protein uL6 family. Part of the 50S ribosomal subunit.

This protein binds to the 23S rRNA, and is important in its secondary structure. It is located near the subunit interface in the base of the L7/L12 stalk, and near the tRNA binding site of the peptidyltransferase center. This chain is Large ribosomal subunit protein uL6, found in Parasynechococcus marenigrum (strain WH8102).